Consider the following 345-residue polypeptide: D-apiose dehydrogenase (345 aa).

15–16 contacts NAD(+); that stretch reads FF. Mg(2+)-binding residues include Trp-24, Lys-25, Val-27, and Ala-30. Residues Asp-37, Ser-79, 97–98, Asn-126, and 165–167 each bind NAD(+); these read QK and QPY. Lys-98 contributes to the substrate binding site. Substrate-binding residues include Gln-165, Asp-178, His-182, and Tyr-232.

It belongs to the Gfo/Idh/MocA family.

The enzyme catalyses D-apiofuranose + NAD(+) = D-apionolactone + NADH + H(+). It functions in the pathway carbohydrate metabolism. Its function is as follows. Involved in catabolism of D-apiose. Catalyzes oxidation of D-apiose to D-apionolactone. The protein is D-apiose dehydrogenase of Rhizobium rhizogenes (strain K84 / ATCC BAA-868) (Agrobacterium radiobacter).